Consider the following 201-residue polypeptide: Inosine triphosphate pyrophosphatase (201 aa).

Position 16–21 (16–21 (TGNAKK)) interacts with ITP. Glutamate 44 is a binding site for Mg(2+). ITP is bound by residues lysine 56, 72-73 (DT), lysine 89, 148-151 (FGWD), lysine 171, and 176-177 (HR).

This sequence belongs to the HAM1 NTPase family. As to quaternary structure, homodimer. It depends on Mg(2+) as a cofactor. Requires Mn(2+) as cofactor.

It is found in the cytoplasm. It carries out the reaction ITP + H2O = IMP + diphosphate + H(+). The enzyme catalyses dITP + H2O = dIMP + diphosphate + H(+). It catalyses the reaction XTP + H2O = XMP + diphosphate + H(+). Functionally, pyrophosphatase that hydrolyzes non-canonical purine nucleotides such as inosine triphosphate (ITP), deoxyinosine triphosphate (dITP) or xanthosine 5'-triphosphate (XTP) to their respective monophosphate derivatives. The enzyme does not distinguish between the deoxy- and ribose forms. Probably excludes non-canonical purines from RNA and DNA precursor pools, thus preventing their incorporation into RNA and DNA and avoiding chromosomal lesions. This is Inosine triphosphate pyrophosphatase from Zea mays (Maize).